Here is a 178-residue protein sequence, read N- to C-terminus: UPF0228 protein MM_0401 (178 aa).

Belongs to the UPF0228 family.

This chain is UPF0228 protein MM_0401, found in Methanosarcina mazei (strain ATCC BAA-159 / DSM 3647 / Goe1 / Go1 / JCM 11833 / OCM 88) (Methanosarcina frisia).